The following is a 624-amino-acid chain: ATP-dependent zinc metalloprotease FtsH (624 aa).

At 1–7 the chain is on the cytoplasmic side; sequence MPRAPFS. Residues 8–28 form a helical membrane-spanning segment; it reads LLALVLGLAFLAWAFSLAGTV. Residues 29-103 are Periplasmic-facing; sequence GAPSGTVNYT…VRVEPPQGQN (75 aa). A helical membrane pass occupies residues 104–124; sequence ALGFLWPLLLVGLLIGALYYF. The Cytoplasmic portion of the chain corresponds to 125-624; sequence SRNGRAGPSD…VKPGGALGGA (500 aa). ATP is bound by residues Ala-159, 199–203, and His-204; that span reads GVGKT. His-418 contacts Zn(2+). The active site involves Glu-419. Positions 422 and 493 each coordinate Zn(2+). The interval 595 to 624 is disordered; it reads PLEAPEEAREEREPPRVVPKVKPGGALGGA. The segment covering 600–609 has biased composition (basic and acidic residues); it reads EEAREEREPP.

The protein in the central section; belongs to the AAA ATPase family. In the C-terminal section; belongs to the peptidase M41 family. The isolated soluble domain (residues 126-624) forms a stable hexamer in which the AAA+ domains (residues 126-400) are alternatively open or closed. Zn(2+) serves as cofactor.

The protein localises to the cell inner membrane. With respect to regulation, the proteolytic activity is dependent on ATP, both the ATPase and protease activities are inhibited by ADP. Functionally, acts as a processive, ATP-dependent zinc metallopeptidase for both cytoplasmic and membrane proteins. Plays a role in the quality control of integral membrane proteins. Its function is as follows. Degrades preferentially unfolded substrates in a processive, ATP-dependent manner, usually after hydrophobic residues. The sequence is that of ATP-dependent zinc metalloprotease FtsH from Thermus thermophilus (strain ATCC 27634 / DSM 579 / HB8).